The sequence spans 152 residues: Aspartate carbamoyltransferase regulatory chain (152 aa).

Positions 108, 113, 136, and 139 each coordinate Zn(2+).

Belongs to the PyrI family. Contains catalytic and regulatory chains. Requires Zn(2+) as cofactor.

Functionally, involved in allosteric regulation of aspartate carbamoyltransferase. This chain is Aspartate carbamoyltransferase regulatory chain, found in Thermococcus kodakarensis (strain ATCC BAA-918 / JCM 12380 / KOD1) (Pyrococcus kodakaraensis (strain KOD1)).